The primary structure comprises 650 residues: Phosphomethylpyrimidine synthase (650 aa).

Substrate contacts are provided by residues Asn241, Met270, Tyr299, His335, 355 to 357 (SRG), 396 to 399 (DGLR), and Glu435. Residue His439 coordinates Zn(2+). Residue Tyr462 participates in substrate binding. His503 contributes to the Zn(2+) binding site. Residues Cys583, Cys586, and Cys591 each coordinate [4Fe-4S] cluster.

Belongs to the ThiC family. Homodimer. [4Fe-4S] cluster is required as a cofactor.

The catalysed reaction is 5-amino-1-(5-phospho-beta-D-ribosyl)imidazole + S-adenosyl-L-methionine = 4-amino-2-methyl-5-(phosphooxymethyl)pyrimidine + CO + 5'-deoxyadenosine + formate + L-methionine + 3 H(+). The protein operates within cofactor biosynthesis; thiamine diphosphate biosynthesis. Catalyzes the synthesis of the hydroxymethylpyrimidine phosphate (HMP-P) moiety of thiamine from aminoimidazole ribotide (AIR) in a radical S-adenosyl-L-methionine (SAM)-dependent reaction. This Pseudoalteromonas translucida (strain TAC 125) protein is Phosphomethylpyrimidine synthase.